The chain runs to 929 residues: Protein translocase subunit SecA (929 aa).

Residues Gln-83, 101-105 (GEGKT), and Asp-491 each bind ATP.

This sequence belongs to the SecA family. In terms of assembly, monomer and homodimer. Part of the essential Sec protein translocation apparatus which comprises SecA, SecYEG and auxiliary proteins SecDF. Other proteins may also be involved.

It localises to the cell inner membrane. It is found in the cellular thylakoid membrane. The protein resides in the cytoplasm. It catalyses the reaction ATP + H2O + cellular proteinSide 1 = ADP + phosphate + cellular proteinSide 2.. Its function is as follows. Part of the Sec protein translocase complex. Interacts with the SecYEG preprotein conducting channel. Has a central role in coupling the hydrolysis of ATP to the transfer of proteins into and across the cell membrane, serving as an ATP-driven molecular motor driving the stepwise translocation of polypeptide chains across the membrane. Probably participates in protein translocation into and across both the cytoplasmic and thylakoid membranes in cyanobacterial cells. The protein is Protein translocase subunit SecA of Thermosynechococcus vestitus (strain NIES-2133 / IAM M-273 / BP-1).